The primary structure comprises 604 residues: Protein CBFA2T2 (604 aa).

Residues 25 to 105 (KRVPAMPGSP…SSTSSALTNQ (81 aa)) form a disordered region. Serine 33 carries the post-translational modification Phosphoserine. Residue lysine 38 forms a Glycyl lysine isopeptide (Lys-Gly) (interchain with G-Cter in SUMO2) linkage. A compositionally biased stretch (pro residues) spans 46–59 (PTMPPLPPINPGGP). Polar residues-rich tracts occupy residues 64–79 (FTPTALSNGINHSPPT) and 88–105 (QRFSNGPASSTSSALTNQ). Positions 107 to 215 (LPATCGARQL…QHEHLLLNTS (109 aa)) are interaction with PRDM14. The TAFH domain occupies 113–208 (ARQLSKLKRF…TPSQYLAQHE (96 aa)). The segment at 229–265 (VHGNGKRPSPERREENSFDRDTIAPEPPAKRVCTISP) is disordered. Basic and acidic residues predominate over residues 236–251 (PSPERREENSFDRDTI). Phosphoserine is present on serine 264. The nervy homology region 2 (NHR2) stretch occupies residues 331-377 (QDELVDHRLTEREWADEWKHLDHALNCIMEMVEKTRRSMAVLRRCQE). The disordered stretch occupies residues 397-427 (RKTGTELVSRQHSPGSADSLSNDSQREFNSR). Residues 402–419 (ELVSRQHSPGSADSLSND) are compositionally biased toward polar residues. Serine 409 is modified (phosphoserine). The interval 435 to 484 (VEFWKKTEEAVNKVKIQAMSEVQKAVAEAEQKAFEVIATERARMEQTIAD) is nervy homology region 3 (NHR3). A Glycyl lysine isopeptide (Lys-Gly) (interchain with G-Cter in SUMO2) cross-link involves residue lysine 449. Residues 451–491 (QAMSEVQKAVAEAEQKAFEVIATERARMEQTIADVKRQAAE) are a coiled coil. Cysteine 507, cysteine 510, cysteine 518, cysteine 521, cysteine 527, cysteine 531, histidine 539, and cysteine 543 together coordinate Zn(2+). The segment at 507-543 (CWNCGRKASETCSGCNIARYCGSFCQHKDWERHHRLC) adopts an MYND-type zinc-finger fold. Positions 547–604 (LHGQSPHGQGRPLLPVGRGSSARSADCSVPSPALDKTSATTSRSSTPASVTAIDTNGL) are disordered. Serine 577 carries the post-translational modification Phosphoserine. The span at 583-598 (TSATTSRSSTPASVTA) shows a compositional bias: low complexity.

This sequence belongs to the CBFA2T family. As to quaternary structure, homooligomer. Homotetramerization is mediated by nervy homology region 2. Can interact with RUNX1T1/CBFA2T1 and CBFA2T3/MTG16; heterotetramerization between members of the CBFA2T family is proposed. Forms a heterooligomer with the AML1-MTG8/ETO fusion protein. Interacts with PRDM14. Interacts with RBPJ, GFI1, TCF4. Interacts with TAL1 and CBFA2T3/MTG16; the heteromer with CBFA2T3/MTG16 may function in repression of TAL1. In terms of tissue distribution, ubiquitously expressed in fetal and adult tissues. Highly expressed in adult brain, heart, lung, kidney, lymph node, appendix, thymus, testis, uterus, small intestine, prostate and thymus.

It localises to the nucleus. Transcriptional corepressor which facilitates transcriptional repression via its association with DNA-binding transcription factors and recruitment of other corepressors and histone-modifying enzymes. Via association with PRDM14 is involved in regulation of embryonic stem cell (ESC) pluripotency. Involved in primordial germ cell (PCG) formation. Stabilizes PRDM14 and OCT4 on chromatin in a homooligomerization-dependent manner. Can repress the expression of MMP7 in a ZBTB33-dependent manner. May function as a complex with the chimeric protein RUNX1/AML1-CBFA2T1/MTG8 (AML1-MTG8/ETO fusion protein) which is produced in acute myeloid leukemia with the chromosomal translocation t(8;21). May thus be involved in the repression of AML1-dependent transcription and the induction of G-CSF/CSF3-dependent cell growth. May be a tumor suppressor gene candidate involved in myeloid tumors with the deletion of the 20q11 region. Through heteromerization with CBFA2T3/MTG16 may be involved in regulation of the proliferation and the differentiation of erythroid progenitors by repressing the expression of TAL1 target genes. Required for the maintenance of the secretory cell lineage in the small intestine. Can inhibit Notch signaling probably by association with RBPJ and may be involved in GFI1-mediated Paneth cell differentiation. The protein is Protein CBFA2T2 (CBFA2T2) of Homo sapiens (Human).